The primary structure comprises 505 residues: Light-independent protochlorophyllide reductase subunit B (505 aa).

Asp-36 provides a ligand contact to [4Fe-4S] cluster. Asp-291 functions as the Proton donor in the catalytic mechanism. 426–427 (GM) is a binding site for substrate.

This sequence belongs to the ChlB/BchB/BchZ family. In terms of assembly, protochlorophyllide reductase is composed of three subunits; ChlL, ChlN and ChlB. Forms a heterotetramer of two ChlB and two ChlN subunits. [4Fe-4S] cluster serves as cofactor.

It carries out the reaction chlorophyllide a + oxidized 2[4Fe-4S]-[ferredoxin] + 2 ADP + 2 phosphate = protochlorophyllide a + reduced 2[4Fe-4S]-[ferredoxin] + 2 ATP + 2 H2O. The protein operates within porphyrin-containing compound metabolism; chlorophyll biosynthesis (light-independent). In terms of biological role, component of the dark-operative protochlorophyllide reductase (DPOR) that uses Mg-ATP and reduced ferredoxin to reduce ring D of protochlorophyllide (Pchlide) to form chlorophyllide a (Chlide). This reaction is light-independent. The NB-protein (ChlN-ChlB) is the catalytic component of the complex. In Gloeobacter violaceus (strain ATCC 29082 / PCC 7421), this protein is Light-independent protochlorophyllide reductase subunit B.